A 170-amino-acid chain; its full sequence is Cathelicidin antimicrobial peptide (170 aa).

The first 30 residues, Met1–Ala30, serve as a signal peptide directing secretion. Residues Gln31–Arg131 constitute a propeptide, cathelin-like domain (CLD). 2 disulfides stabilise this stretch: Cys86–Cys97 and Cys108–Cys125. The tract at residues Phe150–Arg162 is active core.

This sequence belongs to the cathelicidin family. In terms of assembly, monomer, homodimer or homotrimer (in vitro). Oligomerizes as tetra- or hexamer in solution (in vitro). In terms of processing, the N-terminus is blocked. Proteolytically cleaved by proteinase PRTN3 into antibacterial peptide LL-37. Proteolytically cleaved by cathepsin CTSG and neutrophil elastase ELANE. Post-translationally, resistant to proteolytic degradation in solution, and when bound to both zwitterionic (mimicking mammalian membranes) and negatively charged membranes (mimicking bacterial membranes). In terms of processing, after secretion onto the skin surface, the CAMP gene product is processed by a serine protease-dependent mechanism into multiple novel antimicrobial peptides distinct from and shorter than cathelicidin LL-37, such as peptides KR-20 (residues 151-170), LL-23 (residues 134-156), LL-29 (residues 134-162), KS-30 (residues 141-170), RK-31 (residues 140-170) and FF-33 (residues 138-170). The peptides act synergistically, killing bacteria at lower concentrations when present together, and maintain activity at increased salt condition. Expressed in neutrophilic granulocytes (at protein level). Expressed in bone marrow. As to expression, expressed in granulocytes (at protein level). Expressed by the eccrine apparatus and secreted into sweat on skin (at protein level). In terms of tissue distribution, expressed in bone marrow and testis.

The protein localises to the secreted. It localises to the vesicle. Functionally, antimicrobial protein that is an integral component of the innate immune system. Binds to bacterial lipopolysaccharides (LPS). Acts via neutrophil N-formyl peptide receptors to enhance the release of CXCL2. Postsecretory processing generates multiple cathelicidin antimicrobial peptides with various lengths which act as a topical antimicrobial defense in sweat on skin. The unprocessed precursor form, cathelicidin antimicrobial peptide, inhibits the growth of Gram-negative E.coli and E.aerogenes with efficiencies comparable to that of the mature peptide LL-37 (in vitro). Its function is as follows. Antimicrobial peptide that is an integral component of the innate immune system. Binds to bacterial lipopolysaccharides (LPS). Causes membrane permeabilization by forming transmembrane pores (in vitro). Causes lysis of E.coli. Exhibits antimicrobial activity against Gram-negative bacteria such as P.aeruginosa, S.typhimurium, E.aerogenes, E.coli and P.syringae, Gram-positive bacteria such as L.monocytogenes, S.epidermidis, S.pyogenes and S.aureus, as well as vancomycin-resistant enterococci (in vitro). Exhibits antimicrobial activity against methicillin-resistant S.aureus, P.mirabilis, and C.albicans in low-salt media, but not in media containing 100 mM NaCl (in vitro). Forms chiral supramolecular assemblies with quinolone signal (PQS) molecules of P.aeruginosa, which may lead to interference of bacterial quorum signaling and perturbance of bacterial biofilm formation. May form supramolecular fiber-like assemblies on bacterial membranes. Induces cytokine and chemokine production as well as TNF/TNFA and CSF2/GMCSF production in normal human keratinocytes. Exhibits hemolytic activity against red blood cells. Exhibits antimicrobial activity against E.coli and B.megaterium (in vitro). In terms of biological role, acts synergistically with peptides KS-30 and KR-31, killing bacteria such as S.aureus, E.coli and C.albicans at lower concentrations when present together, and maintains activity at increased salt condition. Does not have the ability to stimulate CXCL8/IL8 release from keratinocytes. Functionally, poorly active (MIC &gt; 150 uM) against E.coli strain K12. Is able to induce the pro-inflammatory cytokine TNF/TNFA or the chemokine CCL2/MCP1. Its function is as follows. Moderately antibacterial. Moderately antibacterial. Acts synergistically with peptides KR-20 and KR-31, killing bacteria such as S.aureus, E.coli and C.albicans at lower concentrations when present together, and maintain activity at increased salt condition. Does not have the ability to stimulate CXCL8/IL8 release from keratinocytes. In terms of biological role, acts synergistically with peptides KS-30 and KR-31, killing bacteria such as S.aureus, E.coli and C.albicans at lower concentrations when present together, and maintain activity at increased salt condition. Does not have the ability to stimulate CXCL8/IL8 release from keratinocytes. Functionally, inhibits the growth of E.coli and B.megaterium and exhibits hemolytic activity against human red blood cells. The protein is Cathelicidin antimicrobial peptide of Homo sapiens (Human).